The primary structure comprises 441 residues: Tubulin beta chain (441 aa).

GTP is bound by residues Gln-11, Glu-69, Ser-138, Gly-142, Thr-143, Gly-144, Asn-204, and Asn-226. Residue Glu-69 coordinates Mg(2+).

The protein belongs to the tubulin family. As to quaternary structure, dimer of alpha and beta chains. A typical microtubule is a hollow water-filled tube with an outer diameter of 25 nm and an inner diameter of 15 nM. Alpha-beta heterodimers associate head-to-tail to form protofilaments running lengthwise along the microtubule wall with the beta-tubulin subunit facing the microtubule plus end conferring a structural polarity. Microtubules usually have 13 protofilaments but different protofilament numbers can be found in some organisms and specialized cells. It depends on Mg(2+) as a cofactor.

The protein localises to the cytoplasm. It localises to the cytoskeleton. Tubulin is the major constituent of microtubules, a cylinder consisting of laterally associated linear protofilaments composed of alpha- and beta-tubulin heterodimers. Microtubules grow by the addition of GTP-tubulin dimers to the microtubule end, where a stabilizing cap forms. Below the cap, tubulin dimers are in GDP-bound state, owing to GTPase activity of alpha-tubulin. This is Tubulin beta chain from Babesia bovis.